We begin with the raw amino-acid sequence, 82 residues long: Exodeoxyribonuclease 7 small subunit (82 aa).

Belongs to the XseB family. In terms of assembly, heterooligomer composed of large and small subunits.

It localises to the cytoplasm. The catalysed reaction is Exonucleolytic cleavage in either 5'- to 3'- or 3'- to 5'-direction to yield nucleoside 5'-phosphates.. Its function is as follows. Bidirectionally degrades single-stranded DNA into large acid-insoluble oligonucleotides, which are then degraded further into small acid-soluble oligonucleotides. The protein is Exodeoxyribonuclease 7 small subunit of Coxiella burnetii (strain CbuG_Q212) (Coxiella burnetii (strain Q212)).